Reading from the N-terminus, the 379-residue chain is Bifunctional enzyme IspD/IspF (379 aa).

The segment at Met1–Val223 is 2-C-methyl-D-erythritol 4-phosphate cytidylyltransferase. The tract at residues Arg224–Ala379 is 2-C-methyl-D-erythritol 2,4-cyclodiphosphate synthase. Residues Asp230 and His232 each coordinate a divalent metal cation. 4-CDP-2-C-methyl-D-erythritol 2-phosphate is bound by residues Asp230–His232 and His256–Ser257. Residue His264 coordinates a divalent metal cation. Residues Asp278–Gly280, Thr354–Glu357, Phe361, and Arg364 contribute to the 4-CDP-2-C-methyl-D-erythritol 2-phosphate site.

This sequence in the N-terminal section; belongs to the IspD/TarI cytidylyltransferase family. IspD subfamily. It in the C-terminal section; belongs to the IspF family. Requires a divalent metal cation as cofactor.

The enzyme catalyses 2-C-methyl-D-erythritol 4-phosphate + CTP + H(+) = 4-CDP-2-C-methyl-D-erythritol + diphosphate. The catalysed reaction is 4-CDP-2-C-methyl-D-erythritol 2-phosphate = 2-C-methyl-D-erythritol 2,4-cyclic diphosphate + CMP. The protein operates within isoprenoid biosynthesis; isopentenyl diphosphate biosynthesis via DXP pathway; isopentenyl diphosphate from 1-deoxy-D-xylulose 5-phosphate: step 2/6. It participates in isoprenoid biosynthesis; isopentenyl diphosphate biosynthesis via DXP pathway; isopentenyl diphosphate from 1-deoxy-D-xylulose 5-phosphate: step 4/6. In terms of biological role, bifunctional enzyme that catalyzes the formation of 4-diphosphocytidyl-2-C-methyl-D-erythritol from CTP and 2-C-methyl-D-erythritol 4-phosphate (MEP) (IspD), and catalyzes the conversion of 4-diphosphocytidyl-2-C-methyl-D-erythritol 2-phosphate (CDP-ME2P) to 2-C-methyl-D-erythritol 2,4-cyclodiphosphate (ME-CPP) with a corresponding release of cytidine 5-monophosphate (CMP) (IspF). The polypeptide is Bifunctional enzyme IspD/IspF (Rhodobacter capsulatus (strain ATCC BAA-309 / NBRC 16581 / SB1003)).